Here is a 541-residue protein sequence, read N- to C-terminus: Solute carrier family 22 member 10 (541 aa).

Topologically, residues 1 to 15 (MAFEELLSQVGGLGR) are cytoplasmic. The helical transmembrane segment at 16-36 (FQMLHLVFILPSLMLLIPHIL) threads the bilayer. Topologically, residues 37 to 145 (LENFAAAIPG…DLVCDYQSLK (109 aa)) are extracellular. Residues Asn56 and Asn102 are each glycosylated (N-linked (GlcNAc...) asparagine). The helical transmembrane segment at 146-166 (SVVQFLLLTGMLVGGIIGGHV) threads the bilayer. The Cytoplasmic segment spans residues 167–193 (SDRFGRRFILRWCLLQLAITDTCAAFA). Residues 194 to 214 (PTFPVYCVLRFLAGFSSMIII) form a helical membrane-spanning segment. The Extracellular portion of the chain corresponds to 215 to 230 (SNNSLPITEWIRPNSK). Residues 231–251 (ALVVILSSGALSIGQIILGGL) form a helical membrane-spanning segment. Topologically, residues 252-259 (AYVFRDWQ) are cytoplasmic. A helical transmembrane segment spans residues 260–280 (TLHVVASVPFFVFFLLSRWLV). Residues 281 to 349 (ESARWLIITN…LFRNPSMRKR (69 aa)) are Extracellular-facing. The chain crosses the membrane as a helical span at residues 350–370 (ICILVFLRFANTIPFYGTMVN). The Cytoplasmic portion of the chain corresponds to 371-377 (LQHVGSN). The helical transmembrane segment at 378–398 (IFLLQVLYGAVALIVRCLALL) threads the bilayer. Topologically, residues 399-406 (TLNHMGRR) are extracellular. A helical transmembrane segment spans residues 407–427 (ISQILFMFLVGLSILANTFVP). The Cytoplasmic segment spans residues 428 to 436 (KEMQTLRVA). Residues 437-457 (LACLGIGCSAATFSSVAVHFI) traverse the membrane as a helical segment. At 458–472 (ELIPTVLRARASGID) the chain is on the extracellular side. Residues 473–493 (LTASRIGAALAPLLMTLTVFF) form a helical membrane-spanning segment. Topologically, residues 494–495 (TT) are cytoplasmic. A helical membrane pass occupies residues 496-516 (LPWIIYGIFPIIGGLIVFLLP). The Extracellular segment spans residues 517–541 (ETKNLPLPDTIKDVENQKKNLKEKA).

This sequence belongs to the major facilitator (TC 2.A.1) superfamily. Organic cation transporter (TC 2.A.1.19) family. As to expression, detected in fetal and adult liver, and in adult kidney.

The protein resides in the membrane. The sequence is that of Solute carrier family 22 member 10 (SLC22A10) from Homo sapiens (Human).